The following is a 295-amino-acid chain: Manganese transport system membrane protein MntD (295 aa).

A run of 9 helical transmembrane segments spans residues 7 to 27 (IIATGVLVGVSCGLIGTFLVL), 42 to 62 (LLGIVGAFLVTGSLDGIYMFI), 63 to 83 (GAAATGLLTAFLVQLLHSKGV), 87 to 107 (AAIGVVFTSLFAIGVILLSVY), 138 to 158 (IGPKAFWMLASVLVLNVVLIS), 174 to 194 (ALALGIPVLLIHYVQMGMLSL), 203 to 223 (VGAVLVVAMLIVPPAAAHLLT), 227 to 247 (LYMLILSALIGGLSAVMGYFF), and 253 to 273 (VSISGAMAAMTGVCYASAFLF).

It belongs to the ABC-3 integral membrane protein family. As to quaternary structure, the complex is probably composed of two ATP-binding proteins (MntB), two transmembrane proteins (MntC and MntD) and a solute-binding protein (MntA).

It is found in the cell membrane. In terms of biological role, probably part of the ABC transporter complex MntABCD involved in manganese import. Probably responsible for the translocation of the substrate across the membrane. The sequence is that of Manganese transport system membrane protein MntD from Bacillus subtilis (strain 168).